The primary structure comprises 237 residues: Purine nucleoside phosphorylase DeoD-type (237 aa).

His4 serves as a coordination point for a purine D-ribonucleoside. Residues Gly20, Arg24, Arg43, and 87 to 90 (RVGT) each bind phosphate. Residues 179–181 (EME) and 203–204 (SD) each bind a purine D-ribonucleoside. Asp204 (proton donor) is an active-site residue.

It belongs to the PNP/UDP phosphorylase family. Homohexamer; trimer of homodimers.

It catalyses the reaction a purine D-ribonucleoside + phosphate = a purine nucleobase + alpha-D-ribose 1-phosphate. It carries out the reaction a purine 2'-deoxy-D-ribonucleoside + phosphate = a purine nucleobase + 2-deoxy-alpha-D-ribose 1-phosphate. Its function is as follows. Catalyzes the reversible phosphorolytic breakdown of the N-glycosidic bond in the beta-(deoxy)ribonucleoside molecules, with the formation of the corresponding free purine bases and pentose-1-phosphate. This Streptococcus pyogenes serotype M4 (strain MGAS10750) protein is Purine nucleoside phosphorylase DeoD-type.